Reading from the N-terminus, the 522-residue chain is N-acetylgalactosamine-6-sulfatase (522 aa).

An N-terminal signal peptide occupies residues methionine 1–glycine 25. The tract at residues proline 27–aspartate 379 is catalytic domain. Residues aspartate 38, aspartate 39, and cysteine 78 each coordinate Ca(2+). Cysteine 78 (nucleophile) is an active-site residue. 3-oxoalanine (Cys) is present on cysteine 78. Residue histidine 141 is part of the active site. An N-linked (GlcNAc...) asparagine glycan is attached at asparagine 203. The Ca(2+) site is built by aspartate 288 and asparagine 289. The cysteines at positions 308 and 419 are disulfide-linked. Residue asparagine 423 is glycosylated (N-linked (GlcNAc...) asparagine). Cystine bridges form between cysteine 489/cysteine 518 and cysteine 501/cysteine 507.

It belongs to the sulfatase family. As to quaternary structure, homodimer. It depends on Ca(2+) as a cofactor. Post-translationally, the conversion to 3-oxoalanine (also known as C-formylglycine, FGly), of a serine or cysteine residue in prokaryotes and of a cysteine residue in eukaryotes, is critical for catalytic activity.

Its subcellular location is the lysosome. It catalyses the reaction Hydrolysis of the 6-sulfate groups of the N-acetyl-D-galactosamine 6-sulfate units of chondroitin sulfate and of the D-galactose 6-sulfate units of keratan sulfate.. The chain is N-acetylgalactosamine-6-sulfatase (GALNS) from Canis lupus familiaris (Dog).